The following is a 239-amino-acid chain: Lipid transferase CIDEC (239 aa).

The tract at residues 1–35 (MDYAMKSLSLLYPRSLSRHVAVSTAVVTQQLVSKP) is required for liquid-liquid phase separation (LLPS). The CIDE-N domain occupies 41–118 (RARPCRVSTA…VLLKGQKWKP (78 aa)). Positions 123 to 126 (RKKR) match the RKKR polybasic motif motif.

Belongs to the CIDE family. As to quaternary structure, homodimer. Homooligomer; undergoes liquid-liquid phase separation (LLPS) via its N-terminus, facilitating lipid droplet fusion, occurs at the lipid droplet contact sites. Interacts with CIDEA. Interacts with PLIN1. Interacts with NFAT5; this interaction is direct and retains NFAT5 in the cytoplasm. Interacts with CEBPB. Interacts with isoform CLSTN3beta of CLSTN3; inhibiting the lipid transferase activity of CIDEC. Ubiquitinated and targeted to proteasomal degradation, resulting in a short half-life (about 15 minutes in 3T3-L1 cells). Protein stability depends on triaclyglycerol synthesis, fatty acid availability and lipid droplet formation. As to expression, expressed almost exclusively in adipose tissue, including subcutaneous and epididymal white adipose tissue (at protein level). Although abundantly present in brown adipose tissue at the mRNA level, the protein is almost undetectable in this tissue, or at moderate levels. Expressed in the mammary gland, in stromal adipose tissue, but becomes undetectable at the end of pregnancy and during lactation (at protein level). Expressed at low levels in skeletal muscle and heart.

The protein resides in the lipid droplet. Its subcellular location is the endoplasmic reticulum. The protein localises to the nucleus. It catalyses the reaction a triacyl-sn-glycerol(in) = a triacyl-sn-glycerol(out). In terms of biological role, lipid transferase specifically expressed in white adipose tissue, which promotes unilocular lipid droplet formation by mediating lipid droplet fusion. Lipid droplet fusion promotes their enlargement, restricting lipolysis and favoring lipid storage. Localizes on the lipid droplet surface, at focal contact sites between lipid droplets, and mediates atypical lipid droplet fusion by undergoing liquid-liquid phase separation (LLPS) and promoting directional net neutral lipid transfer from the smaller to larger lipid droplets. The transfer direction may be driven by the internal pressure difference between the contacting lipid droplet pair. Its role in neutral lipid transfer and lipid droplet enlargement is activated by the interaction with PLIN1. May also act as a CEBPB coactivator in the white adipose tissue to control the expression of a subset of CEBPB downstream target genes, including SOCS1, SOCS3, TGFB1, TGFBR1, ID2 and XDH. When overexpressed in preadipocytes, induces apoptosis or increases cell susceptibility to apoptosis induced by serum deprivation or TGFB treatment. In Mus musculus (Mouse), this protein is Lipid transferase CIDEC.